Reading from the N-terminus, the 395-residue chain is MAAASGYTDLREKLKSMTSRDNYKAGSREAAAAAAAAVAAAAAAAAAAEPYPASGTTKRKYQEDSDPERSDYEEHQLQKEEEARKVKSGIRQIRLFSQDECSKIEARIDEVVSRAEKGLYNEHTVDRAPLRNKYFFGEGYTYGAQLQKRGPGQERLYPPGDVDEIPDWVHQLVIQKLVEHRVIPEGFVNSAVINDYQPGGCIVSHVDPIHIFERPIVSVSFFSDSALCFGCKFQFKPIRVSEPVLSLPVRRGSVTVLSGYAADEITHCIRPQDIKERRAVIILRKTRLDAPRLETKSLSSSTLPPSYASDRLSGNTRDPALKPKRSHRKADPDAAHRPRILEMDKEENRRSVLLPTHRRRGSFSSENYWRKSYESSEDCPEAASSPTRKVKMRRH.

Disordered stretches follow at residues 1 to 28 (MAAA…AGSR) and 47 to 83 (AAEP…EEEA). Position 2 is an N-acetylalanine (Ala-2). A Glycyl lysine isopeptide (Lys-Gly) (interchain with G-Cter in ubiquitin) cross-link involves residue Lys-58. Residues 60–83 (KYQEDSDPERSDYEEHQLQKEEEA) are compositionally biased toward basic and acidic residues. Ser-65 and Ser-70 each carry phosphoserine. A coiled-coil region spans residues 68–117 (ERSDYEEHQLQKEEEARKVKSGIRQIRLFSQDECSKIEARIDEVVSRAEK). Tyr-72 carries the post-translational modification Phosphotyrosine. Lys-87 is covalently cross-linked (Glycyl lysine isopeptide (Lys-Gly) (interchain with G-Cter in SUMO1)). Ser-88 bears the Phosphoserine mark. An N6-acetyllysine modification is found at Lys-133. The active site involves Tyr-140. Residues Asn-194, Tyr-196, and His-205 each coordinate 2-oxoglutarate. A disulfide bridge connects residues Cys-231 and Cys-268. Lys-236 bears the N6-acetyllysine mark. The 2-oxoglutarate site is built by His-267 and Arg-278. Positions 294-395 (ETKSLSSSTL…PTRKVKMRRH (102 aa)) are disordered. Over residues 296-306 (KSLSSSTLPPS) the composition is skewed to low complexity. Lys-322 is covalently cross-linked (Glycyl lysine isopeptide (Lys-Gly) (interchain with G-Cter in SUMO1)). The residue at position 326 (Ser-326) is a Phosphoserine. A Glycyl lysine isopeptide (Lys-Gly) (interchain with G-Cter in SUMO2) cross-link involves residue Lys-329. A compositionally biased stretch (basic and acidic residues) spans 329 to 350 (KADPDAAHRPRILEMDKEENRR). Arg-360 carries the omega-N-methylarginine modification. A phosphoserine mark is found at Ser-362, Ser-372, Ser-375, and Ser-385.

Belongs to the alkB family. Monomer. Interacts with RBM33; promoting desumoylation by SENP1 and recruitment to N(6)-methyladenosine-containing mRNAs. Interacts (when acetylated by KAT8) with PSPC1; interaction facilitates recognition of N(6)-methyladenosine (m6A) mRNA. Fe(2+) is required as a cofactor. Phosphorylated at Ser-88 and Ser-326 in response to reactive oxygen species (ROS), promoting sumoylation and inactivation. In terms of processing, acetylated by KAT8 at Lys-236, promoting interaction with PSPC1, thereby facilitating recognition of N(6)-methyladenosine (m6A) mRNA by ALKBH5. Deacetylated at Lys-236 by HDAC7. Post-translationally, sumoylated at Lys-87 and Lys-322 by PIAS4 following phosphorylation at Ser-88 and Ser-326 in response to reactive oxygen species (ROS), inhibiting the RNA demethylase activity. Desumoylated by SENP1; relieving RNA demethylase inhibition, leading to N(6)-methyladenosine-containing mRNAs demethylation. Ubiquitinated at Lys-58 via 'Lys-48'-linked polyubiquitin chain, leading to its degradation by the proteasome. Deubiquitinated at Lys-58 by USP9X, promoting its stabilizazion. Widely expressed, with highest expression in testis. In testis, present in almost all testicular cell types except elongating and elongated spermatids (at protein level). Among spermatogenic cells, present at high level in spermatocytes; medium levels in spermatogonia and lower levels in round spermatids (at protein level).

Its subcellular location is the nucleus speckle. The enzyme catalyses an N(6)-methyladenosine in mRNA + 2-oxoglutarate + O2 = an adenosine in mRNA + formaldehyde + succinate + CO2. With respect to regulation, RNA demethylase activity is inhibited following sumoylation. Inhibition is relieved following desumoylation. Inhibited by histone demethylase inhibitor IOX1. In terms of biological role, dioxygenase that specifically demethylates N(6)-methyladenosine (m6A) RNA, the most prevalent internal modification of messenger RNA (mRNA) in higher eukaryotes. Demethylates RNA by oxidative demethylation, which requires molecular oxygen, alpha-ketoglutarate and iron. Demethylation of m6A mRNA affects mRNA processing, translation and export. Can also demethylate N(6)-methyladenosine in single-stranded DNA (in vitro). Required for the late meiotic and haploid phases of spermatogenesis by mediating m6A demethylation in spermatocytes and round spermatids: m6A demethylation of target transcripts is required for correct splicing and the production of longer 3'-UTR mRNAs in male germ cells. Involved in paraspeckle assembly, a nuclear membraneless organelle, by undergoing liquid-liquid phase separation. Paraspeckle assembly is coupled with m6A demethylation of RNAs, such as NEAT1 non-coding RNA. Also acts as a negative regulator of T-cell development: inhibits gamma-delta T-cell proliferation via demethylation of JAG1 and NOTCH2 transcripts. Inhibits regulatory T-cell (Treg) recruitment by mediating demethylation and destabilization of CCL28 mRNAs. The protein is RNA demethylase ALKBH5 of Mus musculus (Mouse).